We begin with the raw amino-acid sequence, 309 residues long: MATELQCPDSMPCHNQQVNSASTPSPEQLRPGDPILDHAGGNRASRAKVTLLTGHTHCSLPAELDAGACVGSSLNSESNSGSGDSSSYDAPAGNSFLGDCELSRQIGAQLKLLPMNDQIRELQTIIRDKTASRGDFMFSADRLIRLVVEEGLNQLPYKECMVTTPTGYKYEGVKFEKGNCGVSIMRSGEAMEQGLRDCCRSIRIGKILIQSDEETQRAKVYYAKFPPDIYRRKVLLMYPILSTGNTVIEAVKVLIEHGVQPSVIILLSLFSTPHGAKSIIQEFPEITILTTEVHPVAPTHFGQKYFGTD.

The tract at residues 1 to 41 (MATELQCPDSMPCHNQQVNSASTPSPEQLRPGDPILDHAGG) is disordered. Residues 13–26 (CHNQQVNSASTPSP) are compositionally biased toward polar residues. At serine 25 the chain carries Phosphoserine. GTP is bound by residues arginine 133, arginine 142, and 176 to 179 (EKGN). Residue arginine 186 participates in 5-phospho-alpha-D-ribose 1-diphosphate binding. GTP contacts are provided by arginine 203 and arginine 232. 5-phospho-alpha-D-ribose 1-diphosphate is bound at residue 238–246 (YPILSTGNT). 299-301 (THF) contacts uracil.

The protein belongs to the UPRTase family.

It is found in the cytoplasm. The protein resides in the nucleus. The chain is Uracil phosphoribosyltransferase homolog (UPRT) from Macaca fascicularis (Crab-eating macaque).